The chain runs to 61 residues: Small ribosomal subunit protein uS14B (61 aa).

Zn(2+)-binding residues include Cys-24, Cys-27, Cys-40, and Cys-43.

It belongs to the universal ribosomal protein uS14 family. Zinc-binding uS14 subfamily. As to quaternary structure, part of the 30S ribosomal subunit. Contacts proteins S3 and S10. It depends on Zn(2+) as a cofactor.

Functionally, binds 16S rRNA, required for the assembly of 30S particles and may also be responsible for determining the conformation of the 16S rRNA at the A site. In Lactococcus lactis subsp. lactis (strain IL1403) (Streptococcus lactis), this protein is Small ribosomal subunit protein uS14B.